A 299-amino-acid polypeptide reads, in one-letter code: tRNA dimethylallyltransferase (299 aa).

10-17 (GPTASGKS) serves as a coordination point for ATP. 12 to 17 (TASGKS) is a substrate binding site.

This sequence belongs to the IPP transferase family. In terms of assembly, monomer. The cofactor is Mg(2+).

It catalyses the reaction adenosine(37) in tRNA + dimethylallyl diphosphate = N(6)-dimethylallyladenosine(37) in tRNA + diphosphate. Functionally, catalyzes the transfer of a dimethylallyl group onto the adenine at position 37 in tRNAs that read codons beginning with uridine, leading to the formation of N6-(dimethylallyl)adenosine (i(6)A). This Malacoplasma penetrans (strain HF-2) (Mycoplasma penetrans) protein is tRNA dimethylallyltransferase.